Here is a 341-residue protein sequence, read N- to C-terminus: tRNA N6-adenosine threonylcarbamoyltransferase (341 aa).

His-111 and His-115 together coordinate Fe cation. Substrate is bound by residues Leu-134–Gly-138, Asp-167, Gly-180, and Asn-272. Fe cation is bound at residue Asp-300.

This sequence belongs to the KAE1 / TsaD family. Requires Fe(2+) as cofactor.

The protein resides in the cytoplasm. It catalyses the reaction L-threonylcarbamoyladenylate + adenosine(37) in tRNA = N(6)-L-threonylcarbamoyladenosine(37) in tRNA + AMP + H(+). Its function is as follows. Required for the formation of a threonylcarbamoyl group on adenosine at position 37 (t(6)A37) in tRNAs that read codons beginning with adenine. Is involved in the transfer of the threonylcarbamoyl moiety of threonylcarbamoyl-AMP (TC-AMP) to the N6 group of A37, together with TsaE and TsaB. TsaD likely plays a direct catalytic role in this reaction. The polypeptide is tRNA N6-adenosine threonylcarbamoyltransferase (Blochmanniella pennsylvanica (strain BPEN)).